The following is a 234-amino-acid chain: Sperm-associated microtubule inner protein 5 (234 aa).

Microtubule inner protein component of sperm flagellar doublet microtubules. In terms of tissue distribution, expressed in testis (at protein level). Strongly expressed in peritubular cells and Leydig cells and weakly expressed in the cytoplasm of spermatocytes.

It localises to the cytoplasm. The protein resides in the cytoskeleton. The protein localises to the flagellum axoneme. Its subcellular location is the nucleus. Microtubule inner protein (MIP) part of the dynein-decorated doublet microtubules (DMTs) in flagellum axoneme. May serve to reinforce and thus stabilize the microtubule structure in the sperm flagella. The sequence is that of Sperm-associated microtubule inner protein 5 from Homo sapiens (Human).